The sequence spans 371 residues: Chaperone protein DnaJ (371 aa).

Residues Cys5–Gly70 form the J domain. The CR-type zinc finger occupies Gly127–Gln204. Zn(2+) contacts are provided by Cys140, Cys143, Cys156, Cys159, Cys178, Cys181, Cys192, and Cys195. 4 CXXCXGXG motif repeats span residues Cys140 to Gly147, Cys156 to Gly163, Cys178 to Gly185, and Cys192 to Gly199.

Belongs to the DnaJ family. As to quaternary structure, homodimer. It depends on Zn(2+) as a cofactor.

The protein localises to the cytoplasm. Functionally, participates actively in the response to hyperosmotic and heat shock by preventing the aggregation of stress-denatured proteins and by disaggregating proteins, also in an autonomous, DnaK-independent fashion. Unfolded proteins bind initially to DnaJ; upon interaction with the DnaJ-bound protein, DnaK hydrolyzes its bound ATP, resulting in the formation of a stable complex. GrpE releases ADP from DnaK; ATP binding to DnaK triggers the release of the substrate protein, thus completing the reaction cycle. Several rounds of ATP-dependent interactions between DnaJ, DnaK and GrpE are required for fully efficient folding. Also involved, together with DnaK and GrpE, in the DNA replication of plasmids through activation of initiation proteins. The chain is Chaperone protein DnaJ from Francisella tularensis subsp. holarctica (strain LVS).